The following is a 476-amino-acid chain: Cytosolic iron-sulfur assembly component 3 (476 aa).

N-acetylalanine is present on Ala2. Residues Cys24, Cys71, Cys74, Cys77, Cys190, Cys246, Cys395, and Cys399 each coordinate [4Fe-4S] cluster.

Belongs to the NARF family. In terms of assembly, external component of the CIA complex. In the CIA complex, interacts directly with CIAO1 and MMS19.

In terms of biological role, component of the cytosolic iron-sulfur protein assembly (CIA) complex, a multiprotein complex that mediates the incorporation of iron-sulfur cluster into extramitochondrial Fe/S proteins. Seems to negatively regulate the level of HIF1A expression, although this effect could be indirect. In Bos taurus (Bovine), this protein is Cytosolic iron-sulfur assembly component 3.